We begin with the raw amino-acid sequence, 612 residues long: MFSSQNNSYMMMMGGGGIGNINNNQFYSPIISTSAQSFNSIVEWKRDIIRQLNDRNQNQTNNYSEFMRIYTDLLKRERTLNDRTLLYEKEIVSLRNEKKTQQQPPSGSSKMDSSSSSSSSNRVSGMGSTIEEMEQKLFKLQEDLTNSYKRNADNASSILLLNDKNKDLQNELMSKEIEIERIRSTIQQDLDSIKRLEMVVIEKENVSQIIRDELSSLQTEFLHNESKVVKLEQENSSLVERWLRKKNEEASKMNEANDFYQKMVEQRDSTPAKAAVQLSESISNLVVKLPDANDVPIPIVLERGVFSSEAMLPSKAKKRWTGHNSEIYCMAFNSIGNLLATGGGDKCVKVWDVISGQQKSTLLGASQSIVSVSFSPNDESILGTSNDNSARLWNTELGRSRHTLTGHIGKVYTGKFINSNRVVTGSHDRTIKLWDLQKGYCTRTIFCFSSCNDLVILGGSGTHLASGHVDHSVRFWDSNAGEPTQVLSSIHEGQITSITNSPTNTNQILTNSRDHTLKIIDIRTFDTIRTFKDPEYRNGLNWTKASWSPDGRYIASGSIDGSICIWDATNGKTVKVLTKVHNNGSSVCCCSWSPLANIFISADKDKNIIQWE.

Positions 95–128 are disordered; sequence RNEKKTQQQPPSGSSKMDSSSSSSSSNRVSGMGS. A compositionally biased stretch (low complexity) spans 106–128; sequence SGSSKMDSSSSSSSSNRVSGMGS. 7 WD repeats span residues 322-361, 364-403, 406-444, 447-486, 490-530, 535-576, and 582-611; these read GHNS…QKST, GASQ…SRHT, GHIG…CTRT, CFSS…PTQV, IHEG…TIRT, EYRN…TVKV, and NNGS…IIQW.

The protein belongs to the WD repeat tipD family.

In terms of biological role, not known; disruption of the gene for tipD results in morphological defects. This chain is Protein tipD (tipD), found in Dictyostelium discoideum (Social amoeba).